Reading from the N-terminus, the 281-residue chain is Fructose-bisphosphate aldolase class 1 (281 aa).

The Schiff-base intermediate with dihydroxyacetone-P role is filled by K191.

The protein belongs to the DeoC/FbaB aldolase family. As to quaternary structure, homooctamer.

The protein localises to the cytoplasm. The catalysed reaction is beta-D-fructose 1,6-bisphosphate = D-glyceraldehyde 3-phosphate + dihydroxyacetone phosphate. Its activity is regulated as follows. Activated by citrate. The sequence is that of Fructose-bisphosphate aldolase class 1 (fba) from Pyrococcus abyssi (strain GE5 / Orsay).